The chain runs to 177 residues: Transcription termination/antitermination protein NusG (177 aa).

A KOW domain is found at 125–150; sequence EGENVRITEGPFANFTAIVEEYDMVR.

Belongs to the NusG family.

Its function is as follows. Participates in transcription elongation, termination and antitermination. This is Transcription termination/antitermination protein NusG from Campylobacter jejuni subsp. jejuni serotype O:2 (strain ATCC 700819 / NCTC 11168).